An 805-amino-acid polypeptide reads, in one-letter code: Centrosomal protein of 85 kDa-like (805 aa).

Disordered stretches follow at residues 1 to 27 (MWGRFLAPEASGRDSPGGARSFPAGPD) and 50 to 89 (RNNHIRRHSIASDSGDTGIGTSCSDSVEDHSTSSGTLSFK). Ser15 is modified (phosphoserine). The segment covering 60–74 (ASDSGDTGIGTSCSD) has biased composition (polar residues). Ser207 carries the phosphoserine modification. A coiled-coil region spans residues 439-682 (SQQGEFEQKL…LENQRQTDET (244 aa)).

This sequence belongs to the CEP85 family. As to expression, isoform 1 and isoform 4 are expressed in spleen, lymph, thymus, tonsil and peripheral blood leukocytes, with isoform 1 expressed at higher levels. Isoform 4 is detected in K-562 leukemia cells and in the blood of precursor T lymphoblastic lymphoma (T-ALL) patients.

It is found in the cytoplasm. The protein localises to the cytoskeleton. Its subcellular location is the microtubule organizing center. The protein resides in the centrosome. In terms of biological role, plays an essential role in neuronal cell migration. This Homo sapiens (Human) protein is Centrosomal protein of 85 kDa-like.